The primary structure comprises 147 residues: Holdfast attachment protein A (147 aa).

In terms of biological role, involved in attachment of the holdfast to the cell. The holdfast is a structure that allows the bacteria to firmly adheres to surfaces. The sequence is that of Holdfast attachment protein A (hfaA) from Caulobacter vibrioides (strain ATCC 19089 / CIP 103742 / CB 15) (Caulobacter crescentus).